The following is a 280-amino-acid chain: Antiactivator FleN (280 aa).

Residues lysine 19 to asparagine 26, glutamate 153, asparagine 181, proline 215 to aspartate 217, and arginine 221 contribute to the ATP site.

It belongs to the ParA family. As to quaternary structure, forms homodimers. Interacts with FleQ.

With respect to regulation, ATP-binding allows dimerization and subsequent antagonistic effect against FleQ. Functionally, ATPase that plays an important role in maintaining flagellar number in Pseudomonas aeruginosa. Exhibits anti-activator activity against FleQ, the global transcriptional regulator of flagellar genes. This is Antiactivator FleN from Pseudomonas aeruginosa (strain ATCC 15692 / DSM 22644 / CIP 104116 / JCM 14847 / LMG 12228 / 1C / PRS 101 / PAO1).